The chain runs to 629 residues: Forkhead box protein O (629 aa).

Thr49 carries the phosphothreonine; by PKB/AKT1 modification. The residue at position 78 (Ser78) is a Phosphoserine. Positions Trp98–Gly204 form a DNA-binding region, fork-head. Disordered regions lie at residues Lys185–Lys208, Gly220–Arg274, Gln321–Gln368, Ser394–Asn417, and Gln563–Leu597. Ser193 is modified (phosphoserine; by PKB/AKT1). Polar residues-rich tracts occupy residues Ala224–Ser233 and Arg259–Gly268. The residue at position 262 (Ser262) is a Phosphoserine; by PKB/AKT1. Ser265, Ser266, and Ser271 each carry phosphoserine. Over residues Ser332–Pro341 the composition is skewed to pro residues. Low complexity predominate over residues Pro342 to Leu356. Residues Ser394 to Ser403 show a composition bias toward polar residues.

In terms of assembly, interacts with melt.

Its subcellular location is the cytoplasm. The protein resides in the nucleus. Its function is as follows. Transcription factor involved in the regulation of the insulin signaling pathway. Consistently activates both the downstream target Thor\d4EBP and the feedback control target InR. Involved in negative regulation of the cell cycle, modulating cell growth and proliferation. In response to cellular stresses, such as nutrient deprivation or increased levels of reactive oxygen species, foxo is activated and inhibits growth through the action of target genes such as Thor. Foxo activated in the adult fat body can regulate lifespan in adults; an insulin peptide itself may function as one secondary messenger of insulin-regulated aging. Also regulates Lip4, homolog of human acid lipases, thereby acting as a key modulator of lipid metabolism by insulin signaling and integrates insulin responses to glucose and lipid homeostasis. The protein is Forkhead box protein O of Drosophila persimilis (Fruit fly).